The chain runs to 201 residues: 3-isopropylmalate dehydratase small subunit (201 aa).

This sequence belongs to the LeuD family. LeuD type 1 subfamily. Heterodimer of LeuC and LeuD.

It catalyses the reaction (2R,3S)-3-isopropylmalate = (2S)-2-isopropylmalate. Its pathway is amino-acid biosynthesis; L-leucine biosynthesis; L-leucine from 3-methyl-2-oxobutanoate: step 2/4. In terms of biological role, catalyzes the isomerization between 2-isopropylmalate and 3-isopropylmalate, via the formation of 2-isopropylmaleate. The sequence is that of 3-isopropylmalate dehydratase small subunit from Buchnera aphidicola subsp. Baizongia pistaciae (strain Bp).